Consider the following 215-residue polypeptide: Large ribosomal subunit protein bL25 (215 aa).

The tract at residues 190 to 215 (VLTDAEEETDETPEEPEAIRQKGDEE) is disordered. Positions 193–205 (DAEEETDETPEEP) are enriched in acidic residues. Positions 206–215 (EAIRQKGDEE) are enriched in basic and acidic residues.

This sequence belongs to the bacterial ribosomal protein bL25 family. CTC subfamily. As to quaternary structure, part of the 50S ribosomal subunit; part of the 5S rRNA/L5/L18/L25 subcomplex. Contacts the 5S rRNA. Binds to the 5S rRNA independently of L5 and L18.

In terms of biological role, this is one of the proteins that binds to the 5S RNA in the ribosome where it forms part of the central protuberance. In Maricaulis maris (strain MCS10) (Caulobacter maris), this protein is Large ribosomal subunit protein bL25.